A 664-amino-acid polypeptide reads, in one-letter code: DCC-interacting protein 13-beta (664 aa).

The tract at residues 1–428 (MPAVDKLLLE…NSEMENENDK (428 aa)) is required for RAB5A binding. Residues 3–268 (AVDKLLLEEA…ESVYTPDSDV (266 aa)) enclose the BAR domain. The PH domain occupies 277–375 (LIQKAGYLNL…WICAINNISR (99 aa)). A PID domain is found at 488 to 637 (SLLQQMFIVR…LMLSIPLTND (150 aa)). A disordered region spans residues 643 to 664 (LNDQPDDDDGNPNEHRGAESEA). Residues 654 to 664 (PNEHRGAESEA) are compositionally biased toward basic and acidic residues.

In terms of assembly, homodimer. Homotetramer. Binds RAB5A/Rab5 through an N-terminal domain. This interaction is essential for its recruitment to endosomal membranes as well as its role in cell proliferation. Binds subunits of the NuRD/MeCP1 complex. Interacts with FSHR; interaction is independent of follicle stimulating hormone stimulation. Interacts with APPL1; the interaction is decreased by adiponectin in a time-dependent manner. Forms a complex comprising APPL1, RUVBL2, CTNNB1, HDAC1 and HDAC2; interaction reduces interaction between CTNNB1, HDAC1, HDAC2 and RUVBL2 leading to the decrease of deacetylase activity of this complex; affects the recruitment of repressive complexes to the Wnt target genes. Interacts (via BAR domain) with TBC1D1; interaction is dependent of TBC1D1 phosphorylation at 'Ser-235'; interaction diminishes the phosphorylation of TBC1D1 at 'Thr-596', resulting in inhibition of SLC2A4 translocation and glucose uptake. Interacts with ANXA2; targets APPL2 to endosomes and acting in parallel to RAB5A. Interacts with RAB31 (in GTP-bound form); interaction contributes to or enhances recruitment of APPL2 to the phagosomes; interaction enhances Fc-gamma receptor-mediated phagocytosis through PI3K/Akt signaling in macrophages. Interacts with PIK3R1; forms a complex with PIK3R1 and APPL1. Interacts (via BAR domain) with ADIPOR1; hinders the accessibility of APPL1 to ADIPOR1; negatively regulates adiponectin signaling; ADIPOQ dissociates this interaction and facilitates the recruitment of APPL1 to ADIPOR1. Interacts (via BAR domain) with ADIPOR2; ADIPOQ dissociates this interaction. In terms of tissue distribution, high levels in brain, heart, kidney and skeletal muscle.

It is found in the early endosome membrane. The protein resides in the nucleus. It localises to the cell membrane. The protein localises to the endosome membrane. Its subcellular location is the cytoplasm. It is found in the cytoplasmic vesicle. The protein resides in the phagosome. It localises to the cell projection. The protein localises to the ruffle. Its subcellular location is the ruffle membrane. It is found in the phagosome membrane. In terms of biological role, multifunctional adapter protein that binds to various membrane receptors, nuclear factors and signaling proteins to regulate many processes, such as cell proliferation, immune response, endosomal trafficking and cell metabolism. Regulates signaling pathway leading to cell proliferation through interaction with RAB5A and subunits of the NuRD/MeCP1 complex. Plays a role in immune response by modulating phagocytosis, inflammatory and innate immune responses. In macrophages, enhances Fc-gamma receptor-mediated phagocytosis through interaction with RAB31 leading to activation of PI3K/Akt signaling. In response to LPS, modulates inflammatory responses by playing a key role on the regulation of TLR4 signaling and in the nuclear translocation of RELA/NF-kappa-B p65 and the secretion of pro- and anti-inflammatory cytokines. Also functions as a negative regulator of innate immune response via inhibition of AKT1 signaling pathway by forming a complex with APPL1 and PIK3R1. Plays a role in endosomal trafficking of TGFBR1 from the endosomes to the nucleus. Plays a role in cell metabolism by regulating adiponecting ans insulin signaling pathways and adaptative thermogenesis. In muscle, negatively regulates adiponectin-simulated glucose uptake and fatty acid oxidation by inhibiting adiponectin signaling pathway through APPL1 sequestration thereby antagonizing APPL1 action. In muscles, negatively regulates insulin-induced plasma membrane recruitment of GLUT4 and glucose uptake through interaction with TBC1D1. Plays a role in cold and diet-induced adaptive thermogenesis by activating ventromedial hypothalamus (VMH) neurons throught AMPK inhibition which enhances sympathetic outflow to subcutaneous white adipose tissue (sWAT), sWAT beiging and cold tolerance. Also plays a role in other signaling pathways namely Wnt/beta-catenin, HGF and glucocorticoid receptor signaling. Positive regulator of beta-catenin/TCF-dependent transcription through direct interaction with RUVBL2/reptin resulting in the relief of RUVBL2-mediated repression of beta-catenin/TCF target genes by modulating the interactions within the beta-catenin-reptin-HDAC complex. May affect adult neurogenesis in hippocampus and olfactory system via regulating the sensitivity of glucocorticoid receptor. Required for fibroblast migration through HGF cell signaling. The polypeptide is DCC-interacting protein 13-beta (Homo sapiens (Human)).